Reading from the N-terminus, the 163-residue chain is MMNKITHYFKSLLLLELLGGLWLTLKYTFKPKYTVLYPMEKFPQSPRFRGLHALRRYPNGEERCIACKLCEAVCPALAITIDSAKREDGTRRTTRYDIDLFKCIFCGFCEESCPVDSIVETHILEYHFEKRGENIVNKPQLLAIGDRLEAEIAERRAADAAFR.

4Fe-4S ferredoxin-type domains lie at 54–84 (LRRY…IDSA) and 94–123 (TRYD…ETHI). Residues C64, C67, C70, C74, C103, C106, C109, and C113 each contribute to the [4Fe-4S] cluster site.

This sequence belongs to the complex I 23 kDa subunit family. In terms of assembly, NDH-1 is composed of 14 different subunits. Subunits NuoA, H, J, K, L, M, N constitute the membrane sector of the complex. Requires [4Fe-4S] cluster as cofactor.

The protein resides in the cell inner membrane. The catalysed reaction is a quinone + NADH + 5 H(+)(in) = a quinol + NAD(+) + 4 H(+)(out). Its function is as follows. NDH-1 shuttles electrons from NADH, via FMN and iron-sulfur (Fe-S) centers, to quinones in the respiratory chain. The immediate electron acceptor for the enzyme in this species is believed to be ubiquinone. Couples the redox reaction to proton translocation (for every two electrons transferred, four hydrogen ions are translocated across the cytoplasmic membrane), and thus conserves the redox energy in a proton gradient. The sequence is that of NADH-quinone oxidoreductase subunit I from Xanthomonas campestris pv. campestris (strain 8004).